Here is an 897-residue protein sequence, read N- to C-terminus: MGMATYAVVDLETTGNQLDFDDIIQIGITFVRNIQIIDTYHSMIRTNLEIPPFIQALTSIEENMLQQAPYFNQVAQGIYDNMKDCIFVAHNVDFDLNFIKKAFKDCNIQYRPKRVIDTLEIFKIAFPTDKSYQLSELAEAHGITLANAHRADEDAATTAKLMILAFEKFEKLPLDTLKQLYYLSKQLKYDLYDIFFEMVRQYDAKPLAKSYEKFEQIIYRKQVDFKKPTTNYNGSLKSLYSKAVDQLGLTYRPQQLYLAETILDQLMHSEKAMIEASLGSGKSLAYLLAALMYNIETGKHVMISTNTKLLQSQLLEKDIPAMNEALNFKINALLIKSKSDYISLGLISQILKDDTSNYEVNILKMQLLIWITETPSGDIQELNLKGGQKMYFDQKIETYVPARHDVHYYNFIKRNAQNIQIGITNHAHLIHSDVENSIYQLFDDCIVDEAHRLPDYALNQVTNELSYADIKYQLGLIGKNENEKLLKAIDQLEKQRILEKLDIAPIDIFGLKASMNEIHELNEQLFSTIFTIINDSDVYDDDIHRFHNVFTFETKDILKDLHAIIDKLNKTLEIFNGISHKTVKSLRKQLLYLKDKFKNIEQSLKAGHTSFISIKNLSQKSTIRLYVKDYAVKDVLTKQVLEKFKSLIFISGTLKFNHSFDAFKQLFNKDVHFNTFEVNTSLQSAKNTSVFIPSDVASYQYKNIDEYVASIVSYIIEYTTITSSKCLVLFTSYKMMHMVQDMLNELPEFEDYVVLTQQQNQNYKIVQQFNNFDKAILLGTSTFFEGFDFQANGIKCVMIAKLPFMNKHNAKYWLMDSEFTSTFKEYVLPDAVTRFRQGLGRLIRNENDRGIIVSFDDRLINSNYKNIFEQTLENYRQKKGDIQQFGKLLRQIQKKKK.

Residues V8 to L161 form the Exonuclease domain. The 256-residue stretch at S241–R496 folds into the Helicase ATP-binding domain. A276–S283 serves as a coordination point for ATP. The short motif at D448 to H451 is the DEAH box element. One can recognise a Helicase C-terminal domain in the interval N703 to Q883.

It belongs to the helicase family. DinG subfamily. Type 2 sub-subfamily.

In terms of biological role, 3'-5' exonuclease. In Staphylococcus aureus (strain bovine RF122 / ET3-1), this protein is 3'-5' exonuclease DinG.